Consider the following 180-residue polypeptide: tRNA (cytidine(56)-2'-O)-methyltransferase (180 aa).

S-adenosyl-L-methionine is bound by residues Leu-84 and 112–116; that span reads GAEKV.

It belongs to the aTrm56 family. Homodimer.

It is found in the cytoplasm. It carries out the reaction cytidine(56) in tRNA + S-adenosyl-L-methionine = 2'-O-methylcytidine(56) in tRNA + S-adenosyl-L-homocysteine + H(+). Specifically catalyzes the AdoMet-dependent 2'-O-ribose methylation of cytidine at position 56 in tRNAs. This chain is tRNA (cytidine(56)-2'-O)-methyltransferase, found in Haloarcula marismortui (strain ATCC 43049 / DSM 3752 / JCM 8966 / VKM B-1809) (Halobacterium marismortui).